The chain runs to 504 residues: 2,3-bisphosphoglycerate-independent phosphoglycerate mutase (504 aa).

The Mn(2+) site is built by Asp-11 and Ser-61. Ser-61 serves as the catalytic Phosphoserine intermediate. Substrate-binding positions include His-122, Arg-152–Asp-153, Arg-183, Arg-189, Arg-255–Arg-258, and Lys-329. Mn(2+)-binding residues include Asp-396, His-400, Asp-437, His-438, and His-455.

It belongs to the BPG-independent phosphoglycerate mutase family. In terms of assembly, monomer. Mn(2+) is required as a cofactor.

The catalysed reaction is (2R)-2-phosphoglycerate = (2R)-3-phosphoglycerate. Its pathway is carbohydrate degradation; glycolysis; pyruvate from D-glyceraldehyde 3-phosphate: step 3/5. Catalyzes the interconversion of 2-phosphoglycerate and 3-phosphoglycerate. This Bacteroides fragilis (strain YCH46) protein is 2,3-bisphosphoglycerate-independent phosphoglycerate mutase.